A 236-amino-acid chain; its full sequence is 27 kDa hemolymph protein (236 aa).

Residues 1–17 (MMWKLIIVTILAVGVLC) form the signal peptide.

Monomer. In terms of tissue distribution, hemolymph.

The protein localises to the secreted. This is 27 kDa hemolymph protein from Galleria mellonella (Greater wax moth).